The primary structure comprises 202 residues: Coiled-coil domain-containing protein mdt-28 (202 aa).

Composition is skewed to acidic residues over residues M1–E15 and E28–Y45. The disordered stretch occupies residues M1 to P83. The stretch at I159–S184 forms a coiled coil.

In terms of assembly, interacts with mdt-6 and mdt-30. In terms of tissue distribution, ubiquitously expressed in tissues including epidermal, intestinal, pharyngeal and uterine, and is also expressed in vulval muscle cells and gut granules.

It localises to the nucleus. It is found in the cytoplasm. Plays a role in normal growth and development. The protein is Coiled-coil domain-containing protein mdt-28 of Caenorhabditis elegans.